Here is a 560-residue protein sequence, read N- to C-terminus: Kinesin light chain 1 (560 aa).

Residues Val31–Val99 adopt a coiled-coil conformation. Over residues Lys155–Leu176 the composition is skewed to basic and acidic residues. The interval Lys155–Gln203 is disordered. Phosphoserine is present on Ser162. The segment covering Gln192–Gln203 has biased composition (low complexity). TPR repeat units lie at residues Leu213–Thr246, Ala255–Thr288, Ala297–Val330, Ala339–Lys372, and Ala381–Arg414. Tyr449 carries the post-translational modification Phosphotyrosine. Ser460 is subject to Phosphoserine. Residues Thr464–Gly497 form a TPR 6 repeat. Ser521 and Ser524 each carry phosphoserine; by AMPK.

Belongs to the kinesin light chain family. In terms of assembly, oligomeric complex composed of two heavy chains and two light chains. Interacts with SPAG9. Interacts with ATCAY; may link mitochondria to KLC1 and regulate mitochondria localization into neuron projections. Interacts (via TPR repeats) with TOR1A; the interaction associates TOR1A with the kinesin oligomeric complex. Interacts with BORCS5. Interacts with MAPK8IP3/JIP3 and NTRK2/TRKB; interaction with NTRK2/TRKB is mediated by MAPK8IP3/JIP3. Interacts with CLSTN1; phosphorylation at Ser-460 inhibits interaction with CLSTN1. Post-translationally, phosphorylation at Ser-460 by ERK inhibits interaction with CLSTN1 and localization to cytoplasmic vesicles.

It is found in the cell projection. Its subcellular location is the growth cone. The protein resides in the cytoplasmic vesicle. It localises to the cytoplasm. The protein localises to the cytoskeleton. In terms of biological role, kinesin is a microtubule-associated force-producing protein that may play a role in organelle transport. The light chain may function in coupling of cargo to the heavy chain or in the modulation of its ATPase activity. The protein is Kinesin light chain 1 (KLC1) of Pongo abelii (Sumatran orangutan).